Reading from the N-terminus, the 309-residue chain is Pantothenate kinase (309 aa).

ATP is bound at residue 92-99; it reads GSVAVGKT.

It belongs to the prokaryotic pantothenate kinase family.

It localises to the cytoplasm. It carries out the reaction (R)-pantothenate + ATP = (R)-4'-phosphopantothenate + ADP + H(+). It participates in cofactor biosynthesis; coenzyme A biosynthesis; CoA from (R)-pantothenate: step 1/5. This chain is Pantothenate kinase (coaA), found in Lactiplantibacillus plantarum (strain ATCC BAA-793 / NCIMB 8826 / WCFS1) (Lactobacillus plantarum).